The sequence spans 807 residues: uncharacterized protein (807 aa).

Residues 281 to 566 (IIQSLKSEEF…DKILFLGTNI (286 aa)) form the Reverse transcriptase domain.

Its subcellular location is the mitochondrion. This is an uncharacterized protein from Schizosaccharomyces pombe (strain 972 / ATCC 24843) (Fission yeast).